Here is a 218-residue protein sequence, read N- to C-terminus: Variable small protein 8 (218 aa).

The N-terminal stretch at 1 to 18 is a signal peptide; that stretch reads MRKRISAIIMTLFMVFMS. A lipid anchor (N-palmitoyl cysteine) is attached at Cys19. The S-diacylglycerol cysteine moiety is linked to residue Cys19.

Belongs to the variable small protein (Vsp) family.

The protein resides in the cell outer membrane. Its function is as follows. The Vlp and Vsp proteins are antigenically distinct proteins, only one vlp or vsp gene is transcriptionally active at any one time. Switching between these genes is a mechanism of host immune response evasion. The chain is Variable small protein 8 from Borrelia hermsii.